Consider the following 429-residue polypeptide: E3 ubiquitin-protein ligase ZNRF4 (429 aa).

An N-terminal signal peptide occupies residues 1–27 (MLRCRPEPLMPRATRVAVAVSLPLSHA). Residues 28 to 250 (VIPTQLPSHP…PPCRDLDCHP (223 aa)) lie on the Lumenal side of the membrane. The tract at residues 30-64 (PTQLPSHPGHRPSGRPRRCPKAPCLPSPVGLSSTQ) is disordered. Residues 37–49 (PGHRPSGRPRRCP) are compositionally biased toward basic residues. N-linked (GlcNAc...) asparagine glycosylation is present at Asn-152. A PA domain is found at 152–223 (NRSLGAIALI…VGEAASQDLR (72 aa)). A helical membrane pass occupies residues 251–271 (VLTVSWALGRTLALVVSTLFV). Residues 272-429 (LNRLWLWAQA…SPAPPEAPGQ (158 aa)) lie on the Cytoplasmic side of the membrane. An RING-type; atypical zinc finger spans residues 309 to 352 (CAICLDEYEEGDQLKILPCSHTYHCKCIDPWFSQAPRRSCPVCK). Disordered stretches follow at residues 358 to 381 (TEDSFDSTTDSFSDEDPSLPGHRP) and 409 to 429 (TTSLEAEDTTVSPAPPEAPGQ). Polar residues predominate over residues 409–420 (TTSLEAEDTTVS).

Interacts with CANX.

Its subcellular location is the endoplasmic reticulum membrane. It carries out the reaction S-ubiquitinyl-[E2 ubiquitin-conjugating enzyme]-L-cysteine + [acceptor protein]-L-lysine = [E2 ubiquitin-conjugating enzyme]-L-cysteine + N(6)-ubiquitinyl-[acceptor protein]-L-lysine.. It functions in the pathway protein modification; protein ubiquitination. Functionally, E3 ubiquitin-protein ligase that acts as a negative regulator of NOD2 signaling by mediating ubiquitination and degradation of RIPK2. Also catalyzes ubiquitination and proteasomal degradation of CANX within the endoplasmic reticulum. Could have a role in spermatogenesis. This chain is E3 ubiquitin-protein ligase ZNRF4 (ZNRF4), found in Macaca fascicularis (Crab-eating macaque).